We begin with the raw amino-acid sequence, 136 residues long: Small ribosomal subunit protein eS6 (136 aa).

Belongs to the eukaryotic ribosomal protein eS6 family.

This chain is Small ribosomal subunit protein eS6, found in Methanosarcina acetivorans (strain ATCC 35395 / DSM 2834 / JCM 12185 / C2A).